Consider the following 377-residue polypeptide: Methionine import ATP-binding protein MetN 2 (377 aa).

In terms of domain architecture, ABC transporter spans 25–262; sequence IRIEHLSKTF…PKSAVARSFL (238 aa). An ATP-binding site is contributed by 59 to 66; that stretch reads GRSGAGKS.

Belongs to the ABC transporter superfamily. Methionine importer (TC 3.A.1.24) family. As to quaternary structure, the complex is composed of two ATP-binding proteins (MetN), two transmembrane proteins (MetI) and a solute-binding protein (MetQ).

It localises to the cell inner membrane. It catalyses the reaction L-methionine(out) + ATP + H2O = L-methionine(in) + ADP + phosphate + H(+). The enzyme catalyses D-methionine(out) + ATP + H2O = D-methionine(in) + ADP + phosphate + H(+). Functionally, part of the ABC transporter complex MetNIQ involved in methionine import. Responsible for energy coupling to the transport system. The polypeptide is Methionine import ATP-binding protein MetN 2 (Rhodopseudomonas palustris (strain ATCC BAA-98 / CGA009)).